The following is a 564-amino-acid chain: Keratin, type II cytoskeletal 6A (564 aa).

Positions 1–11 (MASTSTTIRSH) are enriched in low complexity. Positions 1 to 23 (MASTSTTIRSHSSSRRGFSANSA) are disordered. Residue Ala2 is modified to N-acetylalanine. Residues 2–162 (ASTSTTIRSH…DPTIQRVRAE (161 aa)) form a head region. Residues 163 to 198 (EREQIKTLNNKFASFIDKVRFLEQQNKVLETKWTLL) form a coil 1A region. Residues 163–476 (EREQIKTLNN…KLLEGEECRL (314 aa)) enclose the IF rod domain. Positions 199–217 (QEQGTKTVRQNLEPLFEQY) are linker 1. The interval 218–309 (INNLRRQLDS…ALYDAELSQM (92 aa)) is coil 1B. The interval 310-333 (QTHISDTSVVLSMDNNRNLDLDSI) is linker 12. The segment at 334–472 (IAEVKAQYEE…ATYRKLLEGE (139 aa)) is coil 2. Residues 473–564 (ECRLNGEGVG…SSSSRKSYKH (92 aa)) form a tail region.

Belongs to the intermediate filament family. Heterodimer of a type I and a type II keratin. KRT6 isomers associate with KRT16 and/or KRT17. Interacts with TCHP. As to expression, expressed in the corneal epithelium (at protein level).

Functionally, epidermis-specific type I keratin involved in wound healing. Involved in the activation of follicular keratinocytes after wounding, while it does not play a major role in keratinocyte proliferation or migration. Participates in the regulation of epithelial migration by inhibiting the activity of SRC during wound repair. In Homo sapiens (Human), this protein is Keratin, type II cytoskeletal 6A (KRT6A).